The primary structure comprises 211 residues: Thymidylate kinase (211 aa).

An ATP-binding site is contributed by 10–17; sequence GVEGCGKT.

This sequence belongs to the thymidylate kinase family.

It carries out the reaction dTMP + ATP = dTDP + ADP. In terms of biological role, phosphorylation of dTMP to form dTDP in both de novo and salvage pathways of dTTP synthesis. This Trichormus variabilis (strain ATCC 29413 / PCC 7937) (Anabaena variabilis) protein is Thymidylate kinase.